Here is a 207-residue protein sequence, read N- to C-terminus: MRAIRMLLVSALAMGAVSAHADEKDVARLTQLLEKSQTITARFSQLTLDASGTSLQEANGEMAVKRPGLFYWHTDAPQEQVVVSDGQKVTLWDPDLEQATIKKLDVRLSQTPALLLSGDVSKISQSFDISSKEQGEVTDFTLKPKTKDTLFDSLRVSFRKGLINDMQLVDSVGQRTNILFNGVKANEAIPASKFKFDVPKGADVIQE.

A signal peptide spans 1 to 21; the sequence is MRAIRMLLVSALAMGAVSAHA.

This sequence belongs to the LolA family. Monomer.

The protein localises to the periplasm. Functionally, participates in the translocation of lipoproteins from the inner membrane to the outer membrane. Only forms a complex with a lipoprotein if the residue after the N-terminal Cys is not an aspartate (The Asp acts as a targeting signal to indicate that the lipoprotein should stay in the inner membrane). This chain is Outer-membrane lipoprotein carrier protein, found in Pseudomonas entomophila (strain L48).